The primary structure comprises 431 residues: Mannan endo-1,4-beta-mannosidase 5 (431 aa).

A signal peptide spans 1-24 (MVPTRNRPMLRILGFFICAAFIYL). The N-linked (GlcNAc...) asparagine glycan is linked to asparagine 45. Tryptophan 97 contacts substrate. Residue asparagine 168 is glycosylated (N-linked (GlcNAc...) asparagine). Position 213 (asparagine 213) interacts with substrate. The active-site Proton donor is the glutamate 214. N-linked (GlcNAc...) asparagine glycosylation is present at asparagine 282. Tyrosine 294 serves as a coordination point for substrate. Residue asparagine 301 is glycosylated (N-linked (GlcNAc...) asparagine). Glutamate 334 acts as the Nucleophile in catalysis. Residue tryptophan 376 participates in substrate binding.

It belongs to the glycosyl hydrolase 5 (cellulase A) family. In terms of tissue distribution, expressed in stems.

The protein resides in the secreted. The enzyme catalyses Random hydrolysis of (1-&gt;4)-beta-D-mannosidic linkages in mannans, galactomannans and glucomannans.. This Arabidopsis thaliana (Mouse-ear cress) protein is Mannan endo-1,4-beta-mannosidase 5 (MAN5).